Here is a 362-residue protein sequence, read N- to C-terminus: Aminomethyltransferase (362 aa).

This sequence belongs to the GcvT family. In terms of assembly, the glycine cleavage system is composed of four proteins: P, T, L and H.

The catalysed reaction is N(6)-[(R)-S(8)-aminomethyldihydrolipoyl]-L-lysyl-[protein] + (6S)-5,6,7,8-tetrahydrofolate = N(6)-[(R)-dihydrolipoyl]-L-lysyl-[protein] + (6R)-5,10-methylene-5,6,7,8-tetrahydrofolate + NH4(+). Functionally, the glycine cleavage system catalyzes the degradation of glycine. This is Aminomethyltransferase from Bacillus subtilis (strain 168).